We begin with the raw amino-acid sequence, 648 residues long: MIRRETFVDDILKEIREIIVQMVPREAGITDVEFEGPELVIYVKNPEAMMKDGELIKNLAKVLKKRISVRPDPDILLPPEKAEELIKQLVPPEAEITNISFDPSVGEVLIEARKPGLVIGKNGETLRLITQKVHWAPRVVRTPPIQSQTIYSIRSILQTESKDRRKFLRQVGRNIYRKSEYKSRWIRITGLGGFREVGRSALLVQTDESYVLVDFGVNIAALKDPTKAYPHFDAPEFRYVLDEGLLDAIIITHAHLDHSGMLPYLFRYKLFDGPIYTTPPTRDLMTLLQQDFIEIQHMNGVEPLYRPKDIKEVIKHTITLDYGEVRDIAPDIRLTLHNAGHILGSSIVHLHIGNGLHNIAITGDFKFIPTRLFEPAVSRFPRLETLVMESTYGGSNDYQMPREEAEKRLIEVIHQTLKRGGKVLIPAMAVGRAQEIMMVLEEYARVGGIEVPIYLDGMIWEATAIHTAYPEYLSKHIREQIFHEGYNPFLNPIFKSVANSRERQDIIDSGEPAIIIATSGMLVGGPSVEYFKQLAPDPKNSIIFVSYQAEGTLGRQVQRGLREIPIVGEDGRTEVINVNMEVHTIDGFSGHADRRELMSYVARVRPRPERIITVHGEAHKCLDLSSSIHKKFGISTRAPNNLDAIRLK.

The segment at 9–76 (DDILKEIREI…ISVRPDPDIL (68 aa)) is KHa. A KHb region spans residues 77-144 (LPPEKAEELI…WAPRVVRTPP (68 aa)). Residues 185–395 (WIRITGLGGF…LVMESTYGGS (211 aa)) form a metallo-beta-lactamase N-terminus region. Zn(2+) is bound by residues His-253, His-255, Asp-257, His-258, His-341, and Asp-364. Residues 396-589 (NDYQMPREEA…MEVHTIDGFS (194 aa)) form a beta-Casp region. The interval 590 to 648 (GHADRRELMSYVARVRPRPERIITVHGEAHKCLDLSSSIHKKFGISTRAPNNLDAIRLK) is metallo-beta-lactamase C-terminus. His-615 lines the Zn(2+) pocket.

It belongs to the metallo-beta-lactamase superfamily. RNA-metabolizing metallo-beta-lactamase-like family. FttA subfamily. In terms of assembly, homodimer. Probably interacts transiently with RNA polymerase (RNAP), (via at least the RNAP stalk subunits Rpo4 and Rpo7), interacts transiently with the Spt4-Spt5 complex. Zn(2+) is required as a cofactor.

Transcription termination is stimulated by the Spt4-Spt5 complex. Dipicolinic acid inhibits FttA-mediated termination in vitro and inhibits growth in vivo. Terminates transcription on the whole genome. Termination is linked to FttA-mediated RNA cleavage and does not require NTP hydrolysis. Cleaves endonucleolytically at the RNA exit channel of RNA polymerase (RNAP); the 5'-3' exonuclease activity of this protein degrades the nascent RNA released from RNAP. In terms of biological role, facilitates transcription termination; addition of this factor to stalled transcription elongation complexes (TEC) promotes nascent transcript cleavage and releases RNA polymerase (RNAP) from DNA in vitro. Transcription termination competes with productive transcription elongation. Termination is stimulated by C-rich transcripts and inhibited by G-rich transcripts; the Spt4-Spt5 complex enhances termination on C-less transcripts. Yields an approximately 100 nucleotide RNA, consistent with endonucleolytic cleavage at the RNA exit channel of RNAP. This Thermococcus kodakarensis (strain ATCC BAA-918 / JCM 12380 / KOD1) (Pyrococcus kodakaraensis (strain KOD1)) protein is Transcription termination factor FttA.